The chain runs to 843 residues: uncharacterized protein (843 aa).

The zn(2)-C6 fungal-type DNA-binding region spans 15–42 (CLRCKQRKIKCDKLWPTCSKCKASSSIC).

The protein resides in the nucleus. Required for growth on non-fermentable carbon sources. This is an uncharacterized protein from Saccharomyces cerevisiae (strain ATCC 204508 / S288c) (Baker's yeast).